We begin with the raw amino-acid sequence, 887 residues long: PAN2-PAN3 deadenylation complex subunit PAN3 (887 aa).

The C3H1-type zinc-finger motif lies at 43-71; sequence GVKLKYCRYYAKDKTCFYGEECQFLHEDP. Disordered regions lie at residues 102–147, 284–307, and 325–392; these read AVAG…IPGM, QTPNPTASEFIPKGGSTSRLSNVS, and SPAT…SGQV. The segment covering 122–138 has biased composition (gly residues); it reads PGTGAAAGGGGSSGGLD. Residues 147–498 are necessary and sufficient for interaction with PABPC1 but not needed for interaction with PAN2; the sequence is MDGGALTDTS…PPPNRIQKSS (352 aa). The PABPC-interacting motif-2 (PAM-2) motif lies at 284-299; it reads QTPNPTASEFIPKGGS. The segment covering 298–307 has biased composition (polar residues); it reads GSTSRLSNVS. A phosphoserine mark is found at serine 354 and serine 361. The span at 363–392 shows a compositional bias: polar residues; that stretch reads TPNPASYMVPSSASTSVNNPVSQTPSSGQV. Positions 463 to 750 are pseudokinase domain; sequence QIDQADMPAV…SVNDIMPMIG (288 aa). Residues arginine 521, 570–577, and 644–645 each bind ATP; these read DFHAGGET and TK. The stretch at 751 to 789 forms a coiled coil; the sequence is ARFYTQLDAAQMRNDVIEEDLAKEVQNGRLFRLLAKLGT. The tract at residues 790–887 is knob domain; that stretch reads INERPEFQKD…ELIAAANGQL (98 aa).

Belongs to the protein kinase superfamily. PAN3 family. In terms of assembly, homodimer. Forms a heterotrimer with a catalytic subunit PAN2 to form the poly(A)-nuclease (PAN) deadenylation complex. Interacts (via PAM-2 motif) with poly(A)-binding protein PABPC1 (via PABC domain), conferring substrate specificity of the enzyme complex. Interacts with the GW182 family proteins TNRC6A, TNRC6B and TNRC6. Interacts with YTHDF3. Interacts with PAN2. Interacts (via N-terminus) with PABPC1 at lower efficiency than isoform 3. As to quaternary structure, interacts with PAN2. Interacts (via N-terminus) with PABPC1 at higher efficiency than isoform 1.

It is found in the cytoplasm. The protein localises to the P-body. Its subcellular location is the nucleus. In terms of biological role, regulatory subunit of the poly(A)-nuclease (PAN) deadenylation complex, one of two cytoplasmic mRNA deadenylases involved in general and miRNA-mediated mRNA turnover. PAN specifically shortens poly(A) tails of RNA and the activity is stimulated by poly(A)-binding protein (PABP). PAN deadenylation is followed by rapid degradation of the shortened mRNA tails by the CCR4-NOT complex. Deadenylated mRNAs are then degraded by two alternative mechanisms, namely exosome-mediated 3'-5' exonucleolytic degradation, or deadenylation-dependent mRNA decapping and subsequent 5'-3' exonucleolytic degradation by XRN1. PAN3 acts as a regulator for PAN activity, recruiting the catalytic subunit PAN2 to mRNA via its interaction with RNA and PABP, and to miRNA targets via its interaction with GW182 family proteins. Decreases PAN2-mediated deadenylation, possibly by preventing progression into the second CCR4-NOT mediated stage of biphasic deadenylation. Has a significant effect on mRNA stability, generally stabilizing a subset of the transcriptome. Stabilizes mRNAs degraded by the AU-rich element (ARE)-mediated mRNA decay pathway but promotes degradation of mRNAs by the microRNA-mediated pathway. Its activity influences mRNP remodeling, specifically reducing formation of a subset of P-bodies containing GW220, an isoform of TNRC6A. Functionally, enhances PAN2 deadenylase activity and has an extensive effect on mRNA stability, generally enhancing mRNA decay across the transcriptome by multiple pathways, including the AU-rich element (ARE)-mediated pathway, microRNA-mediated pathway and the nonsense-mediated pathway (NMD). Its activity is required for efficient P-body formation. May be involved in regulating mRNAs of genes involved in cell cycle progression and cell proliferation. The chain is PAN2-PAN3 deadenylation complex subunit PAN3 from Homo sapiens (Human).